A 260-amino-acid chain; its full sequence is Type II methyltransferase M1.MboII (260 aa).

S-adenosyl-L-methionine contacts are provided by residues C12, D30, K197, S223 to T225, and D241 to M242.

The protein belongs to the N(4)/N(6)-methyltransferase family. In terms of assembly, at low concentration exists as a monomer and homodimer. Probably binds to DNA as a monomer.

It carries out the reaction a 2'-deoxyadenosine in DNA + S-adenosyl-L-methionine = an N(6)-methyl-2'-deoxyadenosine in DNA + S-adenosyl-L-homocysteine + H(+). Its function is as follows. A beta subtype methylase that recognizes the double-stranded sequence 5'-GAAGA-3', methylates A-5 on the top strand, and protects the DNA from cleavage by the MboII endonuclease. It is not known if the cytosine of the complementary sequence TCTTC is also methylated by this enzyme. The sequence is that of Type II methyltransferase M1.MboII from Moraxella bovis.